The primary structure comprises 68 residues: DNA-directed RNA polymerase subunit omega (68 aa).

Belongs to the RNA polymerase subunit omega family. In terms of assembly, the RNAP catalytic core consists of 2 alpha, 1 beta, 1 beta' and 1 omega subunit. When a sigma factor is associated with the core the holoenzyme is formed, which can initiate transcription.

The catalysed reaction is RNA(n) + a ribonucleoside 5'-triphosphate = RNA(n+1) + diphosphate. In terms of biological role, promotes RNA polymerase assembly. Latches the N- and C-terminal regions of the beta' subunit thereby facilitating its interaction with the beta and alpha subunits. The protein is DNA-directed RNA polymerase subunit omega of Dechloromonas aromatica (strain RCB).